A 1509-amino-acid chain; its full sequence is ABC transporter G family member 5 (1509 aa).

Basic and acidic residues predominate over residues 1–10 (MVKQDPRDKS). Positions 1 to 70 (MVKQDPRDKS…NNNNNNIKHK (70 aa)) are disordered. Residues 11 to 28 (SYSPNLSIPINNQEEPTL) are compositionally biased toward polar residues. Over residues 29-66 (NNNNNNNNNNNNNNNNNNNNNNNNNNNNNNNKNNNNNN) the composition is skewed to low complexity. The ABC transporter 1 domain occupies 129–376 (VYCRNATYTV…FKKLGFACPS (248 aa)). Residue 168–175 (GTPGCGKS) coordinates ATP. The ABC transmembrane type-2 1 domain maps to 472–748 (SRNYYNFATR…SVCFFALKYL (277 aa)). 7 consecutive transmembrane segments (helical) span residues 477–497 (NFAT…TLYW), 512–532 (LLFF…NSFF), 557–577 (IICD…IVYW), 583–603 (PVFI…NLSL), 616–636 (IEIA…FSGF), 643–663 (IGGW…FQGL), and 725–745 (IVYA…FFAL). A compositionally biased stretch (low complexity) spans 813-831 (PLTSPNYNNNNNLSGSGNN). The tract at residues 813-881 (PLTSPNYNNN…PISTSQKDIS (69 aa)) is disordered. The segment covering 839 to 881 (TPSTLSPMVNSPLTNLSPMVNTPSKNGNHSKQKPISTSQKDIS) has biased composition (polar residues). An ABC transporter 2 domain is found at 888–1141 (LQFKKLCYAV…VILDYCDKLG (254 aa)). Residue 935 to 942 (GPSGAGKS) participates in ATP binding. In terms of domain architecture, ABC transmembrane type-2 2 spans 1231–1504 (LRRPAIFVSN…GLSFWGFKKV (274 aa)). 6 helical membrane-spanning segments follow: residues 1236–1256 (IFVS…TLFV), 1271–1291 (LLFF…PTTV), 1320–1340 (YPFI…IAGL), 1352–1372 (CLFI…CLAV), 1379–1399 (MAST…GFVI), and 1481–1501 (IDIA…FWGF).

The protein belongs to the ABC transporter superfamily. ABCG family. PDR (TC 3.A.1.205) subfamily.

It is found in the membrane. The protein is ABC transporter G family member 5 (abcG5) of Dictyostelium discoideum (Social amoeba).